The chain runs to 170 residues: J domain-containing protein (170 aa).

The region spanning 17 to 82 is the J domain; that stretch reads DYYALLGCDE…SKRALYDKWR (66 aa). Positions 101 to 170 are disordered; sequence QQSMHWSKPN…VLSKFRNYEI (70 aa). Positions 110 to 120 are enriched in basic and acidic residues; that stretch reads NTKDRMLEGDG. Positions 121–134 are enriched in low complexity; sequence SKPSGPSSLGPSNP.

The protein is J domain-containing protein (jdp) of Bombyx mori (Silk moth).